Reading from the N-terminus, the 305-residue chain is Cytochrome c biogenesis protein CcsA (305 aa).

Transmembrane regions (helical) follow at residues 4-24 (VLGL…LAFW), 32-52 (SGLV…QLVL), 58-78 (GHFP…ACTL), 91-111 (IVAA…SFAL), 136-156 (VIMV…AVLV), 212-232 (TITV…VWAN), 246-263 (TWAL…HTRL), and 275-295 (VASA…LLGI).

Belongs to the CcmF/CycK/Ccl1/NrfE/CcsA family. As to quaternary structure, may interact with ccs1.

The protein localises to the cellular thylakoid membrane. In terms of biological role, required during biogenesis of c-type cytochromes (cytochrome c6 and cytochrome f) at the step of heme attachment. This is Cytochrome c biogenesis protein CcsA from Synechococcus sp. (strain CC9311).